Consider the following 164-residue polypeptide: Transcription elongation factor GreA (164 aa).

Residues 50–76 (YHAAREEQGQQEARIRQLQELLNNAKV) are a coiled coil.

This sequence belongs to the GreA/GreB family.

Its function is as follows. Necessary for efficient RNA polymerase transcription elongation past template-encoded arresting sites. The arresting sites in DNA have the property of trapping a certain fraction of elongating RNA polymerases that pass through, resulting in locked ternary complexes. Cleavage of the nascent transcript by cleavage factors such as GreA or GreB allows the resumption of elongation from the new 3'terminus. GreA releases sequences of 2 to 3 nucleotides. The sequence is that of Transcription elongation factor GreA from Mycolicibacterium smegmatis (strain ATCC 700084 / mc(2)155) (Mycobacterium smegmatis).